A 1286-amino-acid chain; its full sequence is ABC transporter B family member 4 (1286 aa).

The segment at 1–39 (MASESGLNGDPNILEEVSETKRDKEEEEEVKKTEKKDEE) is disordered. The span at 18–39 (SETKRDKEEEEEVKKTEKKDEE) shows a compositional bias: basic and acidic residues. The helical transmembrane segment at 60–80 (FLLMILGTLGSIGNGLGFPLM) threads the bilayer. The 287-residue stretch at 63–349 (MILGTLGSIG…TSPCLSAFAA (287 aa)) folds into the ABC transmembrane type-1 1 domain. N-linked (GlcNAc...) asparagine glycans are attached at residues asparagine 94 and asparagine 97. The next 5 membrane-spanning stretches (helical) occupy residues 109 to 129 (FVWL…GWMI), 186 to 206 (IQLL…GWLL), 208 to 228 (LVML…AIVI), 288 to 308 (GLGL…AVWY), and 317 to 337 (GYTG…SMSL). The ABC transporter 1 domain maps to 384 to 620 (IELKDVYFTY…PEGAYSQLIR (237 aa)). 419–426 (GQSGSGKS) contributes to the ATP binding site. Residues asparagine 500 and asparagine 571 are each glycosylated (N-linked (GlcNAc...) asparagine). A compositionally biased stretch (basic and acidic residues) spans 625-636 (KKSDENAAEEQK). Positions 625 to 669 (KKSDENAAEEQKMSSIESFKQSSLRKSSLGRSLSKGGSSRGNSSR) are disordered. Residues 646–669 (SSLRKSSLGRSLSKGGSSRGNSSR) show a composition bias toward low complexity. Residue asparagine 666 is glycosylated (N-linked (GlcNAc...) asparagine). Serine 671 is subject to Phosphoserine. Residues 720–1007 (LILGSISAAA…SSSLSPDSSK (288 aa)) form the ABC transmembrane type-1 2 domain. 2 helical membrane passes run 721 to 741 (ILGS…GILI) and 764 to 784 (IIFM…TFFF). Residues asparagine 816 and asparagine 846 are each glycosylated (N-linked (GlcNAc...) asparagine). Helical transmembrane passes span 850-870 (ILAG…VVLA), 871-891 (MLPL…GFSA), 942-962 (GIVS…SYAA), and 976-996 (TTFD…MAIS). The ABC transporter 2 domain occupies 1042 to 1279 (IELRHVSFKY…KDGVYASLVQ (238 aa)). Residue 1077–1084 (GESGSGKS) coordinates ATP. Asparagine 1131 and asparagine 1230 each carry an N-linked (GlcNAc...) asparagine glycan.

It belongs to the ABC transporter superfamily. ABCB family. Multidrug resistance exporter (TC 3.A.1.201) subfamily. In terms of assembly, interacts with 1-naphthylphthalamic acid (NPA). Post-translationally, phosphorylation level varies significantly during early response to bacterial elicitor. As to expression, mostly expressed in roots, especially in the root elongation zone and lateral roots. In mature portion of the root, expressed in the epidermis and cortex. In the root elongation zone, confined to epidermis. In root tips, present in the root cap, S3 columella and epidermal cells.

The protein localises to the cell membrane. Its function is as follows. Auxin influx transporter that mediates the transport of auxin in roots. Contributes to the basipetal transport in hypocotyls and root tips by establishing an auxin uptake sink in the root cap. Confers sensitivity to 1-N-naphthylphthalamic acid (NPA). Regulates the root elongation, the initiation of lateral roots and the development of root hairs. Can transport IAA, indole-3-propionic acid, NPA syringic acid, vanillic acid and some auxin metabolites, but not 2,4-D and 1-naphthaleneacetic acid. This Arabidopsis thaliana (Mouse-ear cress) protein is ABC transporter B family member 4 (ABCB4).